Here is a 385-residue protein sequence, read N- to C-terminus: Na(+)/H(+) antiporter NhaA (385 aa).

The next 11 helical transmembrane spans lie at 9 to 29 (YSAIFLLCSAALAIIFANVLD), 45 to 65 (IFGLITPHDIVADFLLAVFFF), 87 to 107 (IIPGVCAAGGILVPISIYLSV), 114 to 134 (GWPVPTATDVAFSLGILAIFG), 155 to 175 (AGIVIIATAFSVSISYWWIIV), 198 to 218 (TFLIIPAMLLCALAAWVSVYQ), 220 to 235 (GIHATIAGVMLGIMLN), 245 to 265 (ALEPYINGIILPAFAFLAAMV), 282 to 302 (ILLGLLFGKLLGISVFGIIAL), 312 to 332 (FFNLLVVSALGGIGFTVSLLM), and 345 to 365 (QGVIAVLIGSLLSAILAIILM).

This sequence belongs to the NhaA Na(+)/H(+) (TC 2.A.33) antiporter family.

It is found in the cell membrane. It catalyses the reaction Na(+)(in) + 2 H(+)(out) = Na(+)(out) + 2 H(+)(in). Na(+)/H(+) antiporter that extrudes sodium in exchange for external protons. This Tropheryma whipplei (strain Twist) (Whipple's bacillus) protein is Na(+)/H(+) antiporter NhaA.